The primary structure comprises 343 residues: GTPase Obg (343 aa).

In terms of domain architecture, Obg spans 2-160 (EKFVDRVKIF…RWIILELKLI (159 aa)). In terms of domain architecture, OBG-type G spans 161 to 332 (ADVGLVGFPN…LKEGLWKKYE (172 aa)). GTP contacts are provided by residues 167–174 (GFPNAGKS), 192–196 (FTTLS), 214–217 (DIPG), 284–287 (NKID), and 313–315 (SAL). Mg(2+) contacts are provided by serine 174 and threonine 194.

It belongs to the TRAFAC class OBG-HflX-like GTPase superfamily. OBG GTPase family. Monomer. Requires Mg(2+) as cofactor.

It localises to the cytoplasm. An essential GTPase which binds GTP, GDP and possibly (p)ppGpp with moderate affinity, with high nucleotide exchange rates and a fairly low GTP hydrolysis rate. Plays a role in control of the cell cycle, stress response, ribosome biogenesis and in those bacteria that undergo differentiation, in morphogenesis control. The polypeptide is GTPase Obg (Aquifex aeolicus (strain VF5)).